Consider the following 988-residue polypeptide: Vacuolar sorting protein 18 (988 aa).

Residues 589–749 (NKNLNPRRLI…VVKQEKGAKR (161 aa)) form a CHCR repeat. A coiled-coil region spans residues 785 to 819 (KEAICSSLEDYNKQIEQLKEEMNDATRGADNIRND). The RING-type; degenerate zinc finger occupies 836 to 886 (CGVCKRKILMMSGDFRMAQGYSSAGPLAPFYVFPCGHSFHAQCLITHVTSC).

Belongs to the VPS18 family. Core component of at least two putative endosomal tethering complexes, the homotypic fusion and vacuole protein sorting (HOPS) complex and the class C core vacuole/endosome tethering (CORVET) complex. Their common core is composed of the class C Vps proteins VPS11, VCL1, VPS18 and VPS33, which in HOPS further associates with VPS39 and VPS41 and in CORVET with VPS3.

Its subcellular location is the endosome membrane. The protein resides in the vacuole membrane. The protein localises to the cytoplasm. Its function is as follows. Essential protein required during embryogenesis. Believed to act as a core component of the putative HOPS endosomal tethering complex and of the class C core vacuole/endosome tethering (CORVET) complex. CORVET is required for vacuolar transport of SYP22. HOPS is required for the central vacuole formation. Involved in root development. Plays a role in vesicle-mediated protein trafficking to lysosomal compartments including the endocytic membrane transport pathways. In Arabidopsis thaliana (Mouse-ear cress), this protein is Vacuolar sorting protein 18.